The chain runs to 501 residues: Aspartate--tRNA ligase, cytoplasmic (501 aa).

Phosphothreonine is present on threonine 52. Lysine 74 bears the N6-acetyllysine mark. Glutamate 229 contributes to the L-aspartate binding site. Serine 249 bears the Phosphoserine mark. The tract at residues 251–254 (QLYK) is aspartate. Arginine 273 provides a ligand contact to L-aspartate. Residues 273-275 (RAE) and 281-283 (RHL) each bind ATP. Lysine 374 carries the post-translational modification N6-acetyllysine. The segment at 411–415 (KQSNS) is binding site for the 3'-end of tRNA. Position 424 (glutamate 424) interacts with ATP. The L-aspartate site is built by serine 427 and arginine 431. Position 472 to 475 (472 to 475 (GLER)) interacts with ATP. Threonine 500 is modified (phosphothreonine; by PKA).

It belongs to the class-II aminoacyl-tRNA synthetase family. Type 2 subfamily. As to quaternary structure, homodimer. Part of a multisubunit complex that groups tRNA ligases for Arg (RARS1), Asp (DARS1), Gln (QARS1), Ile (IARS1), Leu (LARS1), Lys (KARS1), Met (MARS1) the bifunctional ligase for Glu and Pro (EPRS1) and the auxiliary subunits AIMP1/p43, AIMP2/p38 and EEF1E1/p18.

It localises to the cytoplasm. It catalyses the reaction tRNA(Asp) + L-aspartate + ATP = L-aspartyl-tRNA(Asp) + AMP + diphosphate. Its function is as follows. Catalyzes the specific attachment of an amino acid to its cognate tRNA in a 2 step reaction: the amino acid (AA) is first activated by ATP to form AA-AMP and then transferred to the acceptor end of the tRNA. The chain is Aspartate--tRNA ligase, cytoplasmic (DARS1) from Pongo abelii (Sumatran orangutan).